The sequence spans 376 residues: Growth/differentiation factor 8 (376 aa).

An N-terminal signal peptide occupies residues 1–22 (MHLSQIVLYLSLLIALGPVVLS). Residues 23–267 (DQEAHQQPSV…ISEGPRRARR (245 aa)) constitute a propeptide that is removed on maturation. Cystine bridges form between Cys273–Cys283, Cys282–Cys341, Cys310–Cys373, and Cys314–Cys375.

Belongs to the TGF-beta family. As to quaternary structure, homodimer; disulfide-linked. In terms of tissue distribution, highly expressed in muscle. Also expressed in other tissues such as eye, gill, ovary, gut and brain. Very low level detected in testis. Not expressed in liver, kidney, stomach or heart.

It localises to the secreted. Its function is as follows. Acts specifically as a negative regulator of skeletal muscle growth. This chain is Growth/differentiation factor 8, found in Oreochromis mossambicus (Mozambique tilapia).